A 159-amino-acid chain; its full sequence is Fatty acid-binding protein homolog 1 (159 aa).

The signal sequence occupies residues 1–17 (MCAKIALLLVLVGAASA).

This sequence belongs to the calycin superfamily. Fatty-acid binding protein (FABP) family. As to expression, first detected in hypodermal precursor cells at the time of gastrulation. From the two-fold stage through to three-fold stages, expression is localized exclusively to hyp-7 but disappears in newly hatched L1s and subsequent developmental stages. Expression from L1 to adult stages is found in a single neuron in the ventral cord with a process into the nerve ring.

It localises to the secreted. Its function is as follows. May play a role in sequestering potentially toxic fatty acids and their peroxidation products, or it may be involved in the maintenance of the impermeable lipid layer of the eggshell. In Caenorhabditis elegans, this protein is Fatty acid-binding protein homolog 1 (lbp-1).